Here is a 666-residue protein sequence, read N- to C-terminus: tRNA 5-methylaminomethyl-2-thiouridine biosynthesis bifunctional protein MnmC (666 aa).

Residues 1–245 form a tRNA (mnm(5)s(2)U34)-methyltransferase region; that stretch reads MKQYAIQPAT…KREMLCGVME (245 aa). Positions 270–666 are FAD-dependent cmnm(5)s(2)U34 oxidoreductase; the sequence is IGGGIASALL…RKLLKGKAVK (397 aa).

The protein in the N-terminal section; belongs to the methyltransferase superfamily. tRNA (mnm(5)s(2)U34)-methyltransferase family. This sequence in the C-terminal section; belongs to the DAO family. Requires FAD as cofactor.

Its subcellular location is the cytoplasm. It carries out the reaction 5-aminomethyl-2-thiouridine(34) in tRNA + S-adenosyl-L-methionine = 5-methylaminomethyl-2-thiouridine(34) in tRNA + S-adenosyl-L-homocysteine + H(+). Catalyzes the last two steps in the biosynthesis of 5-methylaminomethyl-2-thiouridine (mnm(5)s(2)U) at the wobble position (U34) in tRNA. Catalyzes the FAD-dependent demodification of cmnm(5)s(2)U34 to nm(5)s(2)U34, followed by the transfer of a methyl group from S-adenosyl-L-methionine to nm(5)s(2)U34, to form mnm(5)s(2)U34. This Salmonella paratyphi A (strain ATCC 9150 / SARB42) protein is tRNA 5-methylaminomethyl-2-thiouridine biosynthesis bifunctional protein MnmC.